A 1067-amino-acid chain; its full sequence is Tricorn protease homolog 1 (1067 aa).

The interval 518 to 551 (TTPSPFGPQRHGRPFETPDREETPDSEGTPTTRI) is disordered. Positions 530-540 (RPFETPDREET) are enriched in basic and acidic residues. H740 acts as the Charge relay system in catalysis. Residues 754–851 (RQGLLGADLS…HAVVVPLADE (98 aa)) are PDZ-like. G914 contributes to the substrate binding site. Residue S961 is the Nucleophile of the active site. The active-site Charge relay system is the E1019.

This sequence belongs to the peptidase S41B family. Forms a homohexameric complex; it is not known if it assembles into higher-order structures.

It localises to the cytoplasm. Its activity is regulated as follows. Stimulated by MgCl2. In terms of biological role, degrades oligopeptides in a sequential manner. This is Tricorn protease homolog 1 (tri1) from Streptomyces coelicolor (strain ATCC BAA-471 / A3(2) / M145).